The primary structure comprises 145 residues: Aspartate 1-decarboxylase (145 aa).

S25 (schiff-base intermediate with substrate; via pyruvic acid) is an active-site residue. S25 carries the pyruvic acid (Ser) modification. T57 is a binding site for substrate. Y58 acts as the Proton donor in catalysis. 73 to 75 is a substrate binding site; that stretch reads GAA.

The protein belongs to the PanD family. In terms of assembly, heterooctamer of four alpha and four beta subunits. The cofactor is pyruvate. In terms of processing, is synthesized initially as an inactive proenzyme, which is activated by self-cleavage at a specific serine bond to produce a beta-subunit with a hydroxyl group at its C-terminus and an alpha-subunit with a pyruvoyl group at its N-terminus.

It is found in the cytoplasm. The enzyme catalyses L-aspartate + H(+) = beta-alanine + CO2. It functions in the pathway cofactor biosynthesis; (R)-pantothenate biosynthesis; beta-alanine from L-aspartate: step 1/1. Catalyzes the pyruvoyl-dependent decarboxylation of aspartate to produce beta-alanine. In Micrococcus luteus (strain ATCC 4698 / DSM 20030 / JCM 1464 / CCM 169 / CCUG 5858 / IAM 1056 / NBRC 3333 / NCIMB 9278 / NCTC 2665 / VKM Ac-2230) (Micrococcus lysodeikticus), this protein is Aspartate 1-decarboxylase.